We begin with the raw amino-acid sequence, 192 residues long: MKALFLVIFAYLLGSITFGEVIAKLKGVDLRNVGSGNVGATNVTRALGKKYGVLVFFLDFLKGFIPALIAVKSFGIDSWVLTFTGLASVLGHMYPVFFGFKGGKGVATALGVVFAVSPSVALFSFLVWLGIFLWKRYVSLASITATISAFLFLFVAGYPVNVLFMAIVIGALIIYRHRENINRLLTGREHRF.

5 helical membrane passes run 3–23, 51–71, 80–100, 112–132, and 149–169; these read ALFL…EVIA, YGVL…LIAV, VLTF…FFGF, VVFA…LGIF, and AFLF…AIVI.

It belongs to the PlsY family. As to quaternary structure, probably interacts with PlsX.

The protein localises to the cell inner membrane. The enzyme catalyses an acyl phosphate + sn-glycerol 3-phosphate = a 1-acyl-sn-glycero-3-phosphate + phosphate. The protein operates within lipid metabolism; phospholipid metabolism. Functionally, catalyzes the transfer of an acyl group from acyl-phosphate (acyl-PO(4)) to glycerol-3-phosphate (G3P) to form lysophosphatidic acid (LPA). This enzyme utilizes acyl-phosphate as fatty acyl donor, but not acyl-CoA or acyl-ACP. The protein is Glycerol-3-phosphate acyltransferase of Aquifex aeolicus (strain VF5).